The following is a 357-amino-acid chain: DNA integrity scanning protein DisA (357 aa).

One can recognise a DAC domain in the interval 3 to 141; it reads RPTLRETVAR…GGERHVVADS (139 aa). Residues G70, L88, and 101-105 each bind ATP; that span reads TRHRS.

The protein belongs to the DisA family. As to quaternary structure, homooctamer. It depends on Mg(2+) as a cofactor.

The catalysed reaction is 2 ATP = 3',3'-c-di-AMP + 2 diphosphate. In terms of biological role, participates in a DNA-damage check-point. DisA forms globular foci that rapidly scan along the chromosomes searching for lesions. Also has diadenylate cyclase activity, catalyzing the condensation of 2 ATP molecules into cyclic di-AMP (c-di-AMP). c-di-AMP likely acts as a signaling molecule that may couple DNA integrity with a cellular process. The chain is DNA integrity scanning protein DisA from Mycolicibacterium paratuberculosis (strain ATCC BAA-968 / K-10) (Mycobacterium paratuberculosis).